The chain runs to 452 residues: Enolase (452 aa).

Glutamine 167 is a (2R)-2-phosphoglycerate binding site. Catalysis depends on glutamate 209, which acts as the Proton donor. Residues aspartate 250, glutamate 307, and aspartate 334 each contribute to the Mg(2+) site. (2R)-2-phosphoglycerate-binding residues include lysine 359, arginine 388, serine 389, and lysine 410. The Proton acceptor role is filled by lysine 359.

It belongs to the enolase family. It depends on Mg(2+) as a cofactor.

Its subcellular location is the cytoplasm. It is found in the secreted. The protein localises to the cell surface. The catalysed reaction is (2R)-2-phosphoglycerate = phosphoenolpyruvate + H2O. It functions in the pathway carbohydrate degradation; glycolysis; pyruvate from D-glyceraldehyde 3-phosphate: step 4/5. Its function is as follows. Catalyzes the reversible conversion of 2-phosphoglycerate (2-PG) into phosphoenolpyruvate (PEP). It is essential for the degradation of carbohydrates via glycolysis. This chain is Enolase, found in Mesomycoplasma hyopneumoniae (strain 232) (Mycoplasma hyopneumoniae).